A 235-amino-acid chain; its full sequence is Replication protein (235 aa).

Position 149 (tyrosine 149) interacts with DNA.

It belongs to the Gram-positive plasmids replication protein type 1 family.

Functionally, produces a single-strand nick in a specific site of the plasmid, and this nick results in single-strand replication by rolling circle mechanism. This Bacillus sp protein is Replication protein (repB).